Consider the following 234-residue polypeptide: NAD-dependent protein deacetylase (234 aa).

A Deacetylase sirtuin-type domain is found at 1–234; that stretch reads MSDITAAQTT…AVDFFEGVQV (234 aa). 11 residues coordinate NAD(+): alanine 23, threonine 27, arginine 35, glutamine 99, isoleucine 101, aspartate 102, histidine 117, threonine 184, serine 185, asparagine 208, and valine 226. Positions 101 and 102 each coordinate nicotinamide. Residue histidine 117 is the Proton acceptor of the active site.

This sequence belongs to the sirtuin family. Class U subfamily.

It localises to the cytoplasm. It catalyses the reaction N(6)-acetyl-L-lysyl-[protein] + NAD(+) + H2O = 2''-O-acetyl-ADP-D-ribose + nicotinamide + L-lysyl-[protein]. Its function is as follows. NAD-dependent protein deacetylase which modulates the activities of several enzymes which are inactive in their acetylated form. This is NAD-dependent protein deacetylase from Lactiplantibacillus plantarum (strain ATCC BAA-793 / NCIMB 8826 / WCFS1) (Lactobacillus plantarum).